A 175-amino-acid chain; its full sequence is Putative FAS1 domain-containing protein 081L (175 aa).

The FAS1 domain maps to 28–172; it reads GPIVPSVWTI…GLVHIVDQFP (145 aa).

The polypeptide is Putative FAS1 domain-containing protein 081L (Invertebrate iridescent virus 3 (IIV-3)).